A 233-amino-acid chain; its full sequence is MAKLSKRMRVIREKVDGTKEYSINEAIALLKELATAKFVESVDVAVNLGIDARKSDQNVRGATVLPHGTGRDVRVAVFTQGANAEAAKAAGAELVGMDDLADLVKKGEMNFDVVIASPDAMRVVGQLGQILGPRGLMPNPKVGTVTPNVAEAVKNAKAGQVRYRNDKNGIIHTTLGKVSFDEVQLKENLESLLVALKKAKPSSAKGIFIKKVSISTTMGAGVAVDQASLEAQG.

The protein belongs to the universal ribosomal protein uL1 family. In terms of assembly, part of the 50S ribosomal subunit.

Its function is as follows. Binds directly to 23S rRNA. The L1 stalk is quite mobile in the ribosome, and is involved in E site tRNA release. Functionally, protein L1 is also a translational repressor protein, it controls the translation of the L11 operon by binding to its mRNA. This is Large ribosomal subunit protein uL1 from Aeromonas salmonicida (strain A449).